Here is a 504-residue protein sequence, read N- to C-terminus: Glycerol kinase (504 aa).

ADP is bound at residue Thr13. 3 residues coordinate ATP: Thr13, Thr14, and Ser15. Thr13 provides a ligand contact to sn-glycerol 3-phosphate. Arg17 serves as a coordination point for ADP. The sn-glycerol 3-phosphate site is built by Arg83, Glu84, and Tyr135. The glycerol site is built by Arg83, Glu84, and Tyr135. The residue at position 231 (His231) is a Phosphohistidine; by HPr. Residue Asp245 coordinates sn-glycerol 3-phosphate. Glycerol contacts are provided by Asp245 and Gln246. Positions 267 and 310 each coordinate ADP. 4 residues coordinate ATP: Thr267, Gly310, Gln314, and Gly411. ADP contacts are provided by Gly411 and Asn415.

The protein belongs to the FGGY kinase family. In terms of assembly, homotetramer and homodimer (in equilibrium). Post-translationally, the phosphoenolpyruvate-dependent sugar phosphotransferase system (PTS), including enzyme I, and histidine-containing protein (HPr) are required for the phosphorylation, which leads to the activation of the enzyme.

It catalyses the reaction glycerol + ATP = sn-glycerol 3-phosphate + ADP + H(+). The protein operates within polyol metabolism; glycerol degradation via glycerol kinase pathway; sn-glycerol 3-phosphate from glycerol: step 1/1. Its activity is regulated as follows. Activated by phosphorylation and inhibited by fructose 1,6-bisphosphate (FBP). Its function is as follows. Key enzyme in the regulation of glycerol uptake and metabolism. Catalyzes the phosphorylation of glycerol to yield sn-glycerol 3-phosphate. The polypeptide is Glycerol kinase (Pediococcus pentosaceus (strain ATCC 25745 / CCUG 21536 / LMG 10740 / 183-1w)).